A 186-amino-acid chain; its full sequence is Lactoylglutathione lyase (186 aa).

In terms of domain architecture, VOC spans 28–175 (FMQQTMFRIK…DGYWIELFDR (148 aa)). Positions 31 and 35 each coordinate substrate. Glutamine 31 contacts Zn(2+). Position 97 (glutamate 97) interacts with Zn(2+). Substrate contacts are provided by residues asparagine 101, arginine 121, histidine 125, and 155–156 (KM). Zn(2+) is bound at residue histidine 125. Glutamate 171 provides a ligand contact to Zn(2+). Residue glutamate 171 is the Proton donor/acceptor of the active site.

Belongs to the glyoxalase I family. The cofactor is Zn(2+).

The enzyme catalyses (R)-S-lactoylglutathione = methylglyoxal + glutathione. The protein operates within secondary metabolite metabolism; methylglyoxal degradation; (R)-lactate from methylglyoxal: step 1/2. Catalyzes the conversion of hemimercaptal, formed from methylglyoxal and glutathione, to S-lactoylglutathione. This chain is Lactoylglutathione lyase, found in Cicer arietinum (Chickpea).